The primary structure comprises 1076 residues: DNA-directed RNA polymerase subunit beta (1076 aa).

It belongs to the RNA polymerase beta chain family. As to quaternary structure, in plastids the minimal PEP RNA polymerase catalytic core is composed of four subunits: alpha, beta, beta', and beta''. When a (nuclear-encoded) sigma factor is associated with the core the holoenzyme is formed, which can initiate transcription.

The protein localises to the plastid. The catalysed reaction is RNA(n) + a ribonucleoside 5'-triphosphate = RNA(n+1) + diphosphate. In terms of biological role, DNA-dependent RNA polymerase catalyzes the transcription of DNA into RNA using the four ribonucleoside triphosphates as substrates. The chain is DNA-directed RNA polymerase subunit beta from Euglena longa (Euglenophycean alga).